Reading from the N-terminus, the 1075-residue chain is Paired amphipathic helix protein pst2 (1075 aa).

PAH domains follow at residues 28 to 102, 138 to 208, and 243 to 319; these read SPNG…LPSS, LPCT…LPSS, and RPDN…TSLS. Residues Ser-641 and Ser-643 each carry the phosphoserine modification. Residues 647 to 700 form a disordered region; that stretch reads LTEFVKQPKINGQRESRSAAAARKKEESGNKSQSNSQNSLSDESGNVTPVSKKQ. Residues 658 to 675 show a composition bias toward basic and acidic residues; the sequence is GQRESRSAAAARKKEESG. Residues 676-691 show a composition bias toward low complexity; that stretch reads NKSQSNSQNSLSDESG.

Heterotetramer of alp13, clr6, prw1 and pst2.

The protein localises to the nucleus. Its function is as follows. Has a role in chromatin assembly and chromosome segregation. Involved in the deacetylation of histones. This Schizosaccharomyces pombe (strain 972 / ATCC 24843) (Fission yeast) protein is Paired amphipathic helix protein pst2 (pst2).